A 560-amino-acid chain; its full sequence is MLSRLSERCSIATGLEQVLRRHVWSAAWLRDAEPAAAASQNIDLSCLMERAGRAAYDVFSNLYTSQQHWLILVGSGNNGGDGYVIARHAREAGKIVTVLCMPHSKPLPAEAASAQHAWKAVGGTETTMNPGAPLQLPADVDLIVDGLLGTGICGPPREQYEDVIRHINGLPVPRVAIDIPSGLNAETGEVAGACVKADHTATFICLKPGLLTGQAKDYVGQLHYRSLGLEDWMTAPERMRAALCRRVALDDVYEYFGIRRSALAHKGRCGKVILVGGDHGFGGATLMSAEACVTVGAGLTRVLTRPEYAAPLLTRCPEAMVTAVETDTGGQLEQQMLAAFEWASTLAVGPGLGTGAYGQAALTAALRHAEVHQDKTLVLDADALNLLAGRLHGKEGGAAAGAGKHLPVLPNSIITPHPGEAARLLACRVADVEKDRLAAARRLAAILGGTCLLKGPGTIVHCHSSAKTAIVDAGNAGMASGGMGDVLTGLLAGLAAQRMHDTFNTTCAGALVHGVAADMVAAEDGRGTRGIRATELIHRVPLIVNASGPSPATRQRSSGP.

An NAD(P)H-hydrate epimerase region spans residues 1-241 (MLSRLSERCS…WMTAPERMRA (241 aa)). Positions 29-235 (LRDAEPAAAA…SLGLEDWMTA (207 aa)) constitute a YjeF N-terminal domain. The tract at residues 77–81 (NNGGD) is NADPHX 1; for epimerase activity. 2 residues coordinate K(+): Asn-78 and Asp-145. The segment at 149 to 155 (GTGICGP) is NADPHX 1; for epimerase activity. Residues Tyr-160 and Asp-178 each contribute to the (6S)-NADPHX site. Ser-181 contributes to the K(+) binding site. The region spanning 249–547 (LDDVYEYFGI…HRVPLIVNAS (299 aa)) is the YjeF C-terminal domain. Residues 249-560 (LDDVYEYFGI…PATRQRSSGP (312 aa)) are ADP-dependent (S)-NAD(P)H-hydrate dehydratase. Gly-351 is a binding site for (6S)-NADPHX. The tract at residues 417–423 (HPGEAAR) is NADPHX 2; for dehydratase activity. Residues 454-458 (KGPGT) and 475-484 (NAGMASGGMG) contribute to the ADP site. Asp-485 is a (6S)-NADPHX binding site.

It in the N-terminal section; belongs to the NnrE/AIBP family. The protein in the C-terminal section; belongs to the NnrD/CARKD family. The cofactor is K(+).

The catalysed reaction is (6S)-NADHX + ADP = AMP + phosphate + NADH + H(+). It carries out the reaction (6S)-NADPHX + ADP = AMP + phosphate + NADPH + H(+). The enzyme catalyses (6R)-NADHX = (6S)-NADHX. It catalyses the reaction (6R)-NADPHX = (6S)-NADPHX. In terms of biological role, bifunctional enzyme that catalyzes the epimerization of the S- and R-forms of NAD(P)HX and the dehydration of the S-form of NAD(P)HX at the expense of ADP, which is converted to AMP. This allows the repair of both epimers of NAD(P)HX, a damaged form of NAD(P)H that is a result of enzymatic or heat-dependent hydration. The protein is Bifunctional NAD(P)H-hydrate repair enzyme of Leishmania infantum.